A 505-amino-acid polypeptide reads, in one-letter code: MAGGSKTRIHASLVSTLLLLLPLASAIHRSDFPASFLFGTATSSYQIEGAYLEGNKSLSNWDVFTHLPGNIKDGSNGDIADDHYHRYEEDVELMNSLGVNAYRFSISWSRILPKGRFGGVNPAGIDFYNKLIDSILLKGIQPFVTLTHYDIPQELEDRYGAWLNAEIQSDFGHFADVCFGAFGDRVKYWTTFNEPNVAVRHGYMLGTYPPSRCSPPFGHCARGGDSHAEPYVAAHNVILSHATAIEIYKRKYQSKQRGMIGMVLYSTWYEPLRDVPEDRLATERALAFETPWFLDPLVYGDYPPEMRQILGGRLPSFSPEDRRKLRYKLDFIGVNHYTTLYARDCMFSDCPQGQETQHALAAVTGESNGLPIGTPTAMPTFYVVPDGIEKMVKYFMRRYNNLPMFITENGYAQGGDSYTDAEDWIDDEDRIEYLEGYLTKLAKVIRDGADVRGYFAWSVVDNFEWLFGYTLRFGLYYIDYRTQERSPKLSALWYKEFLQNLHENQ.

Residues 1-26 (MAGGSKTRIHASLVSTLLLLLPLASA) form the signal peptide. An a beta-D-glucoside-binding site is contributed by Q46. The N-linked (GlcNAc...) asparagine glycan is linked to N55. Residues H148 and 193 to 194 (NE) each bind a beta-D-glucoside. E194 serves as the catalytic Proton donor. The cysteines at positions 213 and 220 are disulfide-linked. Residue Y337 coordinates a beta-D-glucoside. A disulfide bridge links C345 with C350. A beta-D-glucoside-binding positions include E408, W457, 464–465 (EW), and F473. The active-site Nucleophile is E408.

It belongs to the glycosyl hydrolase 1 family. Expressed in roots, leaves, flowers and pollen.

It carries out the reaction Hydrolysis of terminal, non-reducing beta-D-glucosyl residues with release of beta-D-glucose.. Functionally, hydrolyzes glycosides and monolignol glucosides. Can hydrolyze para-nitrophenyl beta-D-glucopyranoside (pNPGlc) in vitro. Hydrolyzes para-nitrophenyl beta-D-fucopyranoside, para-nitrophenyl beta-D-galactopyranoside and para-nitrophenyl beta-D-xylopyranoside in vitro. Hydrolyzes the monolignol glucosides coniferin and syringin with high catalytic efficiencies. The sequence is that of Beta-glucosidase 18 from Oryza sativa subsp. japonica (Rice).